The following is a 68-amino-acid chain: DNA-directed RNA polymerase subunit omega (68 aa).

It belongs to the RNA polymerase subunit omega family. In terms of assembly, the RNAP catalytic core consists of 2 alpha, 1 beta, 1 beta' and 1 omega subunit. When a sigma factor is associated with the core the holoenzyme is formed, which can initiate transcription.

The enzyme catalyses RNA(n) + a ribonucleoside 5'-triphosphate = RNA(n+1) + diphosphate. In terms of biological role, promotes RNA polymerase assembly. Latches the N- and C-terminal regions of the beta' subunit thereby facilitating its interaction with the beta and alpha subunits. This chain is DNA-directed RNA polymerase subunit omega, found in Desulforapulum autotrophicum (strain ATCC 43914 / DSM 3382 / VKM B-1955 / HRM2) (Desulfobacterium autotrophicum).